A 335-amino-acid chain; its full sequence is DNA-directed RNA polymerase subunit alpha (335 aa).

The tract at residues 1-233 is alpha N-terminal domain (alpha-NTD); the sequence is MQRNWRELIK…DQLTIFINFE (233 aa). The alpha C-terminal domain (alpha-CTD) stretch occupies residues 249–335; the sequence is FNDHLFRSVD…DIENRRKEQE (87 aa).

It belongs to the RNA polymerase alpha chain family. As to quaternary structure, homodimer. The RNAP catalytic core consists of 2 alpha, 1 beta, 1 beta' and 1 omega subunit. When a sigma factor is associated with the core the holoenzyme is formed, which can initiate transcription.

It carries out the reaction RNA(n) + a ribonucleoside 5'-triphosphate = RNA(n+1) + diphosphate. In terms of biological role, DNA-dependent RNA polymerase catalyzes the transcription of DNA into RNA using the four ribonucleoside triphosphates as substrates. The protein is DNA-directed RNA polymerase subunit alpha of Syntrophobacter fumaroxidans (strain DSM 10017 / MPOB).